Here is a 23-residue protein sequence, read N- to C-terminus: Cytochrome c3-1 (23 aa).

Residues 1–23 (AAPKAPADGLKMDKTKQXVVFNH) are disordered. Histidine 23 is a heme binding site.

Binds 4 heme groups per subunit.

It is found in the periplasm. Participates in sulfate respiration coupled with phosphorylation by transferring electrons from the enzyme dehydrogenase to ferredoxin. This chain is Cytochrome c3-1, found in Nitratidesulfovibrio vulgaris (Desulfovibrio vulgaris).